Here is a 201-residue protein sequence, read N- to C-terminus: uncharacterized protein (201 aa).

Residues 1–22 form a disordered region; it reads MAASKAAKSSEDRAGGGGGGGG.

This is an uncharacterized protein from Tomato ringspot virus (isolate raspberry) (ToRSV).